The following is a 61-amino-acid chain: Small ribosomal subunit protein uS14 (61 aa).

Zn(2+) contacts are provided by C24, C27, C40, and C43.

Belongs to the universal ribosomal protein uS14 family. Zinc-binding uS14 subfamily. Part of the 30S ribosomal subunit. Contacts proteins S3 and S10. Requires Zn(2+) as cofactor.

Functionally, binds 16S rRNA, required for the assembly of 30S particles and may also be responsible for determining the conformation of the 16S rRNA at the A site. The polypeptide is Small ribosomal subunit protein uS14 (Deinococcus deserti (strain DSM 17065 / CIP 109153 / LMG 22923 / VCD115)).